Reading from the N-terminus, the 408-residue chain is Menaquinone reductase (408 aa).

Residues 13–17 (GAGPA), 46–49 (CGDG), R103, A127, D290, and 302–303 (GI) each bind FAD.

This sequence belongs to the geranylgeranyl reductase family. The cofactor is FAD.

The enzyme catalyses menaquinone-9 + AH2 = beta-dihydromenaquinone-9 + A. It participates in quinol/quinone metabolism; menaquinone biosynthesis. Functionally, catalyzes the reduction of a single double bond in the isoprenoid tail of menaquinone (MK-9) in M.tuberculosis, likely the beta-isoprene unit, forming the predominant form of menaquinone found in mycobacteria, MK-9(II-H2). In Mycobacterium tuberculosis (strain CDC 1551 / Oshkosh), this protein is Menaquinone reductase.